The primary structure comprises 34 residues: Photosystem II reaction center protein Psb30 (34 aa).

Residues 7–27 (VAQLLALFVIITSGPAIIILI) form a helical membrane-spanning segment.

This sequence belongs to the Psb30/Ycf12 family. PSII is composed of 1 copy each of membrane proteins PsbA, PsbB, PsbC, PsbD, PsbE, PsbF, PsbH, PsbI, PsbJ, PsbK, PsbL, PsbM, PsbT, PsbX, PsbY, PsbZ, Psb30/Ycf12, peripheral proteins of the oxygen-evolving complex and a large number of cofactors. It forms dimeric complexes.

It localises to the plastid. Its subcellular location is the chloroplast thylakoid membrane. Functionally, a core subunit of photosystem II (PSII), probably helps stabilize the reaction center. In Guillardia theta (Cryptophyte), this protein is Photosystem II reaction center protein Psb30.